Here is a 111-residue protein sequence, read N- to C-terminus: Large ribosomal subunit protein uL22 (111 aa).

The protein belongs to the universal ribosomal protein uL22 family. In terms of assembly, part of the 50S ribosomal subunit.

Functionally, this protein binds specifically to 23S rRNA; its binding is stimulated by other ribosomal proteins, e.g. L4, L17, and L20. It is important during the early stages of 50S assembly. It makes multiple contacts with different domains of the 23S rRNA in the assembled 50S subunit and ribosome. In terms of biological role, the globular domain of the protein is located near the polypeptide exit tunnel on the outside of the subunit, while an extended beta-hairpin is found that lines the wall of the exit tunnel in the center of the 70S ribosome. The sequence is that of Large ribosomal subunit protein uL22 from Geotalea uraniireducens (strain Rf4) (Geobacter uraniireducens).